Consider the following 553-residue polypeptide: Putative transport protein YidE (553 aa).

5 helical membrane-spanning segments follow: residues Ile4 to Val24, Gly28 to Ser48, Phe65 to Ser85, Leu95 to Phe115, and Met158 to Leu178. RCK C-terminal domains follow at residues Gln191–Gln276 and Asp279–Asn361. The next 6 helical transmembrane spans lie at Met371 to Val391, Gly393 to Leu413, Ile439 to Val459, Leu464 to Leu484, Tyr493 to Ala513, and Leu533 to Gly553.

It belongs to the AAE transporter (TC 2.A.81) family. YidE subfamily.

Its subcellular location is the cell membrane. This chain is Putative transport protein YidE, found in Escherichia coli O6:H1 (strain CFT073 / ATCC 700928 / UPEC).